The primary structure comprises 355 residues: UDP-3-O-acylglucosamine N-acyltransferase (355 aa).

Histidine 258 serves as the catalytic Proton acceptor.

The protein belongs to the transferase hexapeptide repeat family. LpxD subfamily. In terms of assembly, homotrimer.

The enzyme catalyses a UDP-3-O-[(3R)-3-hydroxyacyl]-alpha-D-glucosamine + a (3R)-hydroxyacyl-[ACP] = a UDP-2-N,3-O-bis[(3R)-3-hydroxyacyl]-alpha-D-glucosamine + holo-[ACP] + H(+). Its pathway is bacterial outer membrane biogenesis; LPS lipid A biosynthesis. In terms of biological role, catalyzes the N-acylation of UDP-3-O-acylglucosamine using 3-hydroxyacyl-ACP as the acyl donor. Is involved in the biosynthesis of lipid A, a phosphorylated glycolipid that anchors the lipopolysaccharide to the outer membrane of the cell. The protein is UDP-3-O-acylglucosamine N-acyltransferase of Bradyrhizobium sp. (strain ORS 278).